The primary structure comprises 308 residues: Growth/differentiation factor 15 (308 aa).

The first 29 residues, 1–29 (MPGQELKTLNGSQMLLVLLVLLWPPHGGA), serve as a signal peptide directing secretion. Positions 30–192 (VSLAEASRAS…HLRPRASRGR (163 aa)) are excised as a propeptide. Asparagine 70 carries N-linked (GlcNAc...) asparagine glycosylation. A disordered region spans residues 152 to 179 (APALHLRLSPPPSQSDQLLVKSSSSRPQ). Residues 165–178 (QSDQLLVKSSSSRP) are compositionally biased toward polar residues. 4 disulfides stabilise this stretch: cysteine 203–cysteine 210, cysteine 211–cysteine 274, cysteine 240–cysteine 305, and cysteine 244–cysteine 307.

It belongs to the TGF-beta family. As to quaternary structure, homodimer; disulfide-linked. Interacts with GFRAL and RET; ligand of GFRAL, which mediates GDF15 internalization and cellular signaling through interaction with RET via the formation of a 2:2:2 ternary complex composed of GDF15, GFRAL and RET. Detected in plasma (at protein level).

It is found in the secreted. Its function is as follows. Hormone produced in response to various stresses to confer information about those stresses to the brain, and trigger an aversive response, characterized by nausea and/or loss of appetite. The aversive response is both required to reduce continuing exposure to those stresses at the time of exposure and to promote avoidance behavior in the future. Acts by binding to its receptor, GFRAL, activating GFRAL-expressing neurons localized in the area postrema and nucleus tractus solitarius of the brainstem. It then triggers the activation of neurons localized within the parabrachial nucleus and central amygdala, which constitutes part of the 'emergency circuit' that shapes responses to stressful conditions. The GDF15-GFRAL signal induces expression of genes involved in metabolism, such as lipid metabolism in adipose tissues. Required for avoidance behavior in response to food allergens: induced downstream of mast cell activation to promote aversion and minimize harmful effects of exposure to noxious substances. In addition to suppress appetite, also promotes weight loss by enhancing energy expenditure in muscle: acts by increasing calcium futile cycling in muscle. Contributes to the effect of metformin, an anti-diabetic drug, on appetite reduction and weight loss: produced in the kidney in response to metformin treatment, thereby activating the GDF15-GFRAL response, leading to reduced appetite and weight. Produced in response to anticancer drugs, such as camptothecin or cisplatin, promoting nausea and contributing to malnutrition. Overproduced in many cancers, promoting anorexia in cancer (cachexia). Responsible for the risk of nausea during pregnancy: high levels of GDF15 during pregnancy, mostly originating from embryos, are associated with increased nausea. Maternal sensitivity to nausea is probably determined by pre-pregnancy exposure to GDF15, females with naturally high level of GDF15 being less susceptible to nausea than females with low levels of GDF15 before pregnancy. Promotes metabolic adaptation in response to systemic inflammation caused by bacterial and viral infections in order to promote tissue tolerance and prevent tissue damage. Inhibits growth hormone signaling on hepatocytes. This chain is Growth/differentiation factor 15, found in Macaca fascicularis (Crab-eating macaque).